Reading from the N-terminus, the 320-residue chain is Cytochrome f (320 aa).

Positions 1 to 35 (MQTRNTFSWIREEITRSISVSLIIYIITRASISSA) are cleaved as a signal peptide. Heme-binding residues include Y36, C56, C59, and H60. A helical membrane pass occupies residues 286-306 (VQGLLFFLASVVLAQIFLVLK).

The protein belongs to the cytochrome f family. As to quaternary structure, the 4 large subunits of the cytochrome b6-f complex are cytochrome b6, subunit IV (17 kDa polypeptide, petD), cytochrome f and the Rieske protein, while the 4 small subunits are PetG, PetL, PetM and PetN. The complex functions as a dimer. Heme serves as cofactor.

The protein localises to the plastid. It localises to the chloroplast thylakoid membrane. In terms of biological role, component of the cytochrome b6-f complex, which mediates electron transfer between photosystem II (PSII) and photosystem I (PSI), cyclic electron flow around PSI, and state transitions. This chain is Cytochrome f, found in Draba nemorosa (Woodland whitlowgrass).